A 460-amino-acid chain; its full sequence is Flavin-containing monooxygenase FMO GS-OX-like 9 (460 aa).

FAD is bound at residue 20 to 25; that stretch reads GAGPAG. 222–227 contributes to the NADP(+) binding site; it reads GNSMSG.

Belongs to the FMO family. It depends on FAD as a cofactor.

In terms of biological role, catalyzes the conversion of methylthioalkyl glucosinolates of any chain length into methylsulfinylalkyl glucosinolates. This Arabidopsis thaliana (Mouse-ear cress) protein is Flavin-containing monooxygenase FMO GS-OX-like 9.